The chain runs to 496 residues: Probable diguanylate cyclase DgcJ (496 aa).

2 helical membrane passes run 11–31 (FIAA…LVAS) and 305–325 (ILYF…TALI). The region spanning 374 to 496 (SSVMFIAIDM…VNKQNKNSRS (123 aa)) is the GGDEF domain. Asp-382 serves as a coordination point for Mg(2+). Substrate is bound by residues Asn-390, His-395, and Asp-399. Asp-425 contacts Mg(2+). The active-site Proton acceptor is Asp-425.

Homodimer. Mg(2+) serves as cofactor.

Its subcellular location is the cell inner membrane. It carries out the reaction 2 GTP = 3',3'-c-di-GMP + 2 diphosphate. It participates in purine metabolism; 3',5'-cyclic di-GMP biosynthesis. Its function is as follows. Catalyzes the synthesis of cyclic-di-GMP (c-di-GMP) via the condensation of 2 GTP molecules. The chain is Probable diguanylate cyclase DgcJ from Escherichia coli (strain K12).